The following is a 199-amino-acid chain: Putative pseudouridine methyltransferase (199 aa).

S-adenosyl-L-methionine is bound by residues Leu132 and Cys186.

The protein belongs to the methyltransferase superfamily. TrmY family.

It is found in the cytoplasm. The polypeptide is Putative pseudouridine methyltransferase (Vibrio parahaemolyticus serotype O3:K6 (strain RIMD 2210633)).